The following is a 2800-amino-acid chain: Probable serine/threonine-protein kinase roco5 (2800 aa).

Residues Met-1 to Gly-61 are compositionally biased toward basic and acidic residues. Disordered regions lie at residues Met-1–Ser-92, Thr-123–Asp-225, and Gly-417–Ile-437. Residues Pro-77 to Ser-86 show a composition bias toward pro residues. 2 stretches are compositionally biased toward low complexity: residues Thr-123–Asn-134 and Asn-143–Asn-170. The span at Ile-176–Ser-190 shows a compositional bias: polar residues. Residues Ile-194 to Ser-218 show a composition bias toward basic and acidic residues. The region spanning Asn-227–Glu-508 is the DH domain. Residues Gly-417 to Asn-429 show a composition bias toward low complexity. One can recognise a PH domain in the interval Lys-540–Leu-649. 4 LRR repeats span residues Asn-777–Asp-800, Asn-805–Ser-832, Pro-834–Lys-856, and Asn-861–Gln-885. A disordered region spans residues Lys-926–Ser-946. Positions Ser-934 to Ser-946 are enriched in low complexity. 10 LRR repeats span residues Leu-971–Ile-984, Ser-985–Glu-1007, Leu-1008–Met-1031, Glu-1033–Lys-1056, Asn-1058–Gln-1077, Leu-1078–Arg-1101, Ala-1128–Ile-1151, Ser-1152–Leu-1174, Ser-1175–Leu-1197, and Thr-1199–Ile-1222. Positions Lys-1244–Glu-1464 constitute a Roc domain. Residues Gly-1257–Thr-1264, Asp-1348–Gln-1352, and Thr-1407–Asp-1410 each bind GTP. One can recognise a COR 1 domain in the interval Arg-1473 to Asp-1604. Disordered regions lie at residues Pro-1605 to Asn-1665 and Asp-1688 to Ser-1711. 3 stretches are compositionally biased toward low complexity: residues Ser-1610–Thr-1645, Arg-1653–Asn-1665, and Asp-1688–Asn-1707. The COR 2 domain maps to Lys-1717–Leu-1790. The span at Ser-1886–Asn-2008 shows a compositional bias: low complexity. Disordered regions lie at residues Ser-1886 to Ser-2011 and Arg-2050 to Val-2070. A compositionally biased stretch (polar residues) spans Arg-2050 to Gly-2059. The 266-residue stretch at Leu-2175–Leu-2440 folds into the Protein kinase domain. Residues Val-2181 to Val-2189 and Lys-2202 each bind ATP. The active-site Proton acceptor is Asp-2300. 4 stretches are compositionally biased toward low complexity: residues Thr-2452–Ser-2490, Leu-2583–Ser-2654, Thr-2669–Thr-2685, and Ser-2694–Pro-2704. Disordered regions lie at residues Thr-2452–Leu-2498 and Ala-2544–Lys-2800. Over residues Pro-2705–Thr-2723 the composition is skewed to pro residues. The span at Ile-2730–Phe-2756 shows a compositional bias: polar residues. A compositionally biased stretch (low complexity) spans Thr-2757–Thr-2787.

The protein belongs to the protein kinase superfamily. TKL Ser/Thr protein kinase family. ROCO subfamily.

It carries out the reaction L-seryl-[protein] + ATP = O-phospho-L-seryl-[protein] + ADP + H(+). It catalyses the reaction L-threonyl-[protein] + ATP = O-phospho-L-threonyl-[protein] + ADP + H(+). In terms of biological role, may act as a serine/threonine-protein kinase and guanine-nucleotide releasing factor. This chain is Probable serine/threonine-protein kinase roco5 (roco5), found in Dictyostelium discoideum (Social amoeba).